The primary structure comprises 264 residues: MAGPTTAERGARQQESSGPPRVRRFRPPRLRTIIILAVALVLVAGGTVWVLYGSNWTRLERVSVSGTDVLTPAQVREAADVPVGDPLVSVDTEAVEARLRRKLPRIDEVDVERSWPHGIGLKVTERTPVLIVQKGRNFVEVDDEGVRFATVSKAPKDVPTLELEPARSGSAAASLRRFDDDRLVREAVRVAGRLPDKVARDTRVVKVRSYDDISLELSGGRTVSWGSGEQGVRKARALTALMKATPDARHFDVSVATAPASSGS.

Positions 1 to 24 (MAGPTTAERGARQQESSGPPRVRR) are disordered. Topologically, residues 1 to 32 (MAGPTTAERGARQQESSGPPRVRRFRPPRLRT) are cytoplasmic. Residues 33 to 53 (IIILAVALVLVAGGTVWVLYG) traverse the membrane as a helical segment. At 54–264 (SNWTRLERVS…VATAPASSGS (211 aa)) the chain is on the extracellular side. In terms of domain architecture, POTRA spans 57 to 126 (TRLERVSVSG…HGIGLKVTER (70 aa)).

It belongs to the FtsQ/DivIB family. FtsQ subfamily.

It is found in the cell membrane. In terms of biological role, essential cell division protein. In Streptomyces coelicolor (strain ATCC BAA-471 / A3(2) / M145), this protein is Cell division protein FtsQ.